Here is a 360-residue protein sequence, read N- to C-terminus: D-alanine--D-alanine ligase (360 aa).

Positions 146–352 constitute an ATP-grasp domain; that stretch reads KLCVADAGIA…YRNLITRLLE (207 aa). Residue 179-234 participates in ATP binding; sequence EAQVSYPLFVKPASLGSSIGISKVHNREELHPALQAACALDWKVVVESTVKGREIE. 3 residues coordinate Mg(2+): aspartate 305, glutamate 319, and asparagine 321.

The protein belongs to the D-alanine--D-alanine ligase family. Mg(2+) is required as a cofactor. It depends on Mn(2+) as a cofactor.

The protein resides in the cytoplasm. The catalysed reaction is 2 D-alanine + ATP = D-alanyl-D-alanine + ADP + phosphate + H(+). Its pathway is cell wall biogenesis; peptidoglycan biosynthesis. In terms of biological role, cell wall formation. This chain is D-alanine--D-alanine ligase, found in Chlorobium chlorochromatii (strain CaD3).